Reading from the N-terminus, the 103-residue chain is MIPGEILFADGPVAYNEGREVTRLTVLNAADRPVQVGSHYHFAEANPGLDFDRAAARGKRLNVAAGTAVRFEPGIPVDVELVPLAGARVVPGLRGETGGALDA.

Belongs to the urease beta subunit family. In terms of assembly, heterotrimer of UreA (gamma), UreB (beta) and UreC (alpha) subunits. Three heterotrimers associate to form the active enzyme.

It is found in the cytoplasm. It carries out the reaction urea + 2 H2O + H(+) = hydrogencarbonate + 2 NH4(+). Its pathway is nitrogen metabolism; urea degradation; CO(2) and NH(3) from urea (urease route): step 1/1. The chain is Urease subunit beta from Streptomyces avermitilis (strain ATCC 31267 / DSM 46492 / JCM 5070 / NBRC 14893 / NCIMB 12804 / NRRL 8165 / MA-4680).